The primary structure comprises 1062 residues: Protein P1-P2 (1062 aa).

The signal sequence occupies residues methionine 1–alanine 20. 3 consecutive transmembrane segments (helical) span residues alanine 121 to alanine 141, isoleucine 144 to isoleucine 164, and alanine 172 to tryptophan 192. Residues valine 207–glutamate 399 enclose the Peptidase S39 domain. Residues histidine 255, aspartate 286, and serine 354 each act as for protease activity in the active site. The segment at alanine 455–arginine 560 is disordered. Over residues threonine 463–threonine 484 the composition is skewed to polar residues. Over residues glutamine 497 to arginine 511 the composition is skewed to basic residues. Basic and acidic residues predominate over residues glutamine 551–arginine 560. The RdRp catalytic domain maps to glutamate 859–lysine 974.

Specific enzymatic cleavages in vivo yield mature proteins. The protease probably cleaves itself and releases the RdRp (Potential). Cleavages have been shown in the P1 protein, but since the N-terminus containing the serine protease is shared between P1 and P1-P2, cleavages should also occur within the P1-P2 protein.

It localises to the membrane. It carries out the reaction RNA(n) + a ribonucleoside 5'-triphosphate = RNA(n+1) + diphosphate. Its function is as follows. Precursor from which the RNA-dependent RNA polymerase (RdRp) is probably released. RNA-dependent RNA polymerase plays an essential role in virus replication (Potential). The polypeptide is Protein P1-P2 (Potato leafroll virus (strain Potato/Scotland/strain 1/1984) (PLrV)).